We begin with the raw amino-acid sequence, 657 residues long: Trifunctional protein RibF/MnmA (657 aa).

The interval 1–141 is FMN adenylyltransferase; sequence MLSIINLTSK…VVKKDHCSTS (141 aa). A riboflavin kinase region spans residues 158–282; the sequence is LLLTPFYLKG…DKKAALSFFH (125 aa). Residues 283–657 are tRNA-specific 2-thiouridylase MnmA; the sequence is KQEKPKVVVA…GGGKITKIIK (375 aa). ATP contacts are provided by residues 292-299 and Met318; that span reads ALSGGVDS. The segment at 389–391 is interaction with target base in tRNA; sequence NPD. Cys394 serves as the catalytic Nucleophile. A disulfide bridge links Cys394 with Cys492. Position 420 (Gly420) interacts with ATP. The interaction with tRNA stretch occupies residues 442 to 444; it reads KDQ. Residue Cys492 is the Cysteine persulfide intermediate of the active site.

This sequence in the N-terminal section; belongs to the RibF family. The protein in the C-terminal section; belongs to the MnmA/TRMU family.

The protein localises to the cytoplasm. It catalyses the reaction riboflavin + ATP = FMN + ADP + H(+). The catalysed reaction is FMN + ATP + H(+) = FAD + diphosphate. It carries out the reaction S-sulfanyl-L-cysteinyl-[protein] + uridine(34) in tRNA + AH2 + ATP = 2-thiouridine(34) in tRNA + L-cysteinyl-[protein] + A + AMP + diphosphate + H(+). Its pathway is cofactor biosynthesis; FAD biosynthesis; FAD from FMN: step 1/1. It participates in cofactor biosynthesis; FMN biosynthesis; FMN from riboflavin (ATP route): step 1/1. In terms of biological role, involved in FAD and FMN biosynthesis. Catalyzes the 2-thiolation of uridine at the wobble position (U34) of tRNA, leading to the formation of s(2)U34. This Mycoplasmoides gallisepticum (strain R(low / passage 15 / clone 2)) (Mycoplasma gallisepticum) protein is Trifunctional protein RibF/MnmA (ribF/mnmA).